A 462-amino-acid polypeptide reads, in one-letter code: MGKPWSDRFEVGLHPFIESFNASIKFDFLLLQEDLDGSIAHARMLGKTGIINADEASQLEKGLNQIRLEASQGVFNADQPAEDVHFAVENRLIELLGPLGKKLHTGRSRNDQIATDIRLWLRRKIDEINFDLENIQKILLGHAEKNLYTLIPGYTHLQRAQPVSLAHHLLAYLEMFQRDRDRLVEVKSRVNTSPLGAAALAGTSLPIDRLYTADQLNFTSIYSNSLDAVSDRDFAVEFIAASSLIMVHLSRLSEEIIFWSSEEFSFVKLTDRCATGSSIMPQKKNPDVPELVRGKSGRVFGHLQALLVMLKGLPLAYNKDFQEDKEALFDTVVTVRNSLQAMSILLEEGLEFSLDRLGSAVESDFSNATDVADYLVSKEVPFREAYQIVGRLVKLCMKEGILLKDLSFDQWQDMHPAFDQDIYKRLTPEHVVASRISQGGTGFAQVSAQLENWQNQFSSLKE.

The protein belongs to the lyase 1 family. Argininosuccinate lyase subfamily.

The protein resides in the cytoplasm. It carries out the reaction 2-(N(omega)-L-arginino)succinate = fumarate + L-arginine. Its pathway is amino-acid biosynthesis; L-arginine biosynthesis; L-arginine from L-ornithine and carbamoyl phosphate: step 3/3. This Prochlorococcus marinus (strain MIT 9211) protein is Argininosuccinate lyase.